We begin with the raw amino-acid sequence, 159 residues long: Transmembrane protein 88 (159 aa).

2 helical membrane passes run 43–63 (LLLL…MLGF) and 88–108 (FTAL…LALA).

The protein belongs to the TMEM88 family. Interacts (via C-terminus) with DVL1.

It is found in the cell membrane. In terms of biological role, inhibits the Wnt/beta-catenin signaling pathway. Crucial for heart development and acts downstream of GATA factors in the pre-cardiac mesoderm to specify lineage commitment of cardiomyocyte development. The polypeptide is Transmembrane protein 88 (Tmem88) (Mus musculus (Mouse)).